We begin with the raw amino-acid sequence, 761 residues long: uncharacterized protein (761 aa).

A CR-type zinc finger spans residues 1 to 84; the sequence is MIVKCPICDG…CGGSGKVVKC (84 aa). The region spanning 135-200 is the S1 motif domain; the sequence is GKFYKGVVTR…EKREIDFKYI (66 aa).

This is an uncharacterized protein from Methanocaldococcus jannaschii (strain ATCC 43067 / DSM 2661 / JAL-1 / JCM 10045 / NBRC 100440) (Methanococcus jannaschii).